A 310-amino-acid chain; its full sequence is Tyrosine recombinase XerC (310 aa).

Positions 11–97 constitute a Core-binding (CB) domain; sequence NSLQKPLSRF…SLRSFFDFLV (87 aa). In terms of domain architecture, Tyr recombinase spans 118–298; sequence PLPKNLDVDE…DFQHLAQAYD (181 aa). Residues arginine 157, lysine 181, histidine 250, arginine 253, and histidine 276 contribute to the active site. Residue tyrosine 285 is the O-(3'-phospho-DNA)-tyrosine intermediate of the active site.

Belongs to the 'phage' integrase family. XerC subfamily. Forms a cyclic heterotetrameric complex composed of two molecules of XerC and two molecules of XerD.

The protein localises to the cytoplasm. In terms of biological role, site-specific tyrosine recombinase, which acts by catalyzing the cutting and rejoining of the recombining DNA molecules. The XerC-XerD complex is essential to convert dimers of the bacterial chromosome into monomers to permit their segregation at cell division. It also contributes to the segregational stability of plasmids. This chain is Tyrosine recombinase XerC, found in Vibrio atlanticus (strain LGP32) (Vibrio splendidus (strain Mel32)).